A 1162-amino-acid polypeptide reads, in one-letter code: Isoleucine--tRNA ligase (1162 aa).

Residues 50 to 60 (PSANGMPGIHH) carry the 'HIGH' region motif. The 'KMSKS' region motif lies at 710–714 (KMSKR). Residue Lys713 participates in ATP binding.

This sequence belongs to the class-I aminoacyl-tRNA synthetase family. IleS type 2 subfamily. In terms of assembly, monomer. The cofactor is Zn(2+).

It localises to the cytoplasm. It carries out the reaction tRNA(Ile) + L-isoleucine + ATP = L-isoleucyl-tRNA(Ile) + AMP + diphosphate. Functionally, catalyzes the attachment of isoleucine to tRNA(Ile). As IleRS can inadvertently accommodate and process structurally similar amino acids such as valine, to avoid such errors it has two additional distinct tRNA(Ile)-dependent editing activities. One activity is designated as 'pretransfer' editing and involves the hydrolysis of activated Val-AMP. The other activity is designated 'posttransfer' editing and involves deacylation of mischarged Val-tRNA(Ile). The polypeptide is Isoleucine--tRNA ligase (Bacteroides thetaiotaomicron (strain ATCC 29148 / DSM 2079 / JCM 5827 / CCUG 10774 / NCTC 10582 / VPI-5482 / E50)).